A 417-amino-acid chain; its full sequence is Paired box protein Pax-2 (417 aa).

Residues 16–142 (GHGGVNQLGG…SSINRIIRTK (127 aa)) constitute a DNA-binding region (paired). Residues 19–75 (GVNQLGGVFVNGRPLPDVVRQRIVELAHQGVRPCDISRQLRVSHGCVSKILGRYYET) form a PAI subdomain region. Residues 94–142 (KVVDKIAEYKRQNPTMFAWEIRDRLLAEGICDNDTVPSVSSINRIIRTK) are RED subdomain. Threonine 226 is subject to Phosphothreonine. Residues 304–325 (KSSLSASTNPELGSNVSGTQTY) form a disordered region. Residues 305–325 (SSLSASTNPELGSNVSGTQTY) are compositionally biased toward polar residues.

As to quaternary structure, interacts with ELGN3; the interaction targets PAX2 for destruction. Interacts with TLE4. Expressed in primitive cells of the kidney, ureter, eye, ear and central nervous system.

It is found in the nucleus. Transcription factor that may have a role in kidney cell differentiation. Has a critical role in the development of the urogenital tract, the eyes, and the CNS. In Homo sapiens (Human), this protein is Paired box protein Pax-2 (PAX2).